The chain runs to 144 residues: Small ribosomal subunit protein uS9 (144 aa).

Thr-2 carries the post-translational modification N-acetylthreonine. The disordered stretch occupies residues 124 to 144 (RRESKKFGGPGARARYQKSYR).

This sequence belongs to the universal ribosomal protein uS9 family.

In Caenorhabditis elegans, this protein is Small ribosomal subunit protein uS9 (rps-16).